The primary structure comprises 675 residues: Methionine--tRNA ligase (675 aa).

A 'HIGH' region motif is present at residues 15 to 25 (PYANGPIHLGH). Residues cysteine 146, cysteine 149, cysteine 159, and cysteine 162 each coordinate Zn(2+). Residues 332-336 (KMSKS) carry the 'KMSKS' region motif. An ATP-binding site is contributed by lysine 335. Residues 573 to 675 (DFAKVDMRVA…SGAQPGMQVK (103 aa)) form the tRNA-binding domain.

The protein belongs to the class-I aminoacyl-tRNA synthetase family. MetG type 1 subfamily. As to quaternary structure, homodimer. Zn(2+) is required as a cofactor.

Its subcellular location is the cytoplasm. It catalyses the reaction tRNA(Met) + L-methionine + ATP = L-methionyl-tRNA(Met) + AMP + diphosphate. In terms of biological role, is required not only for elongation of protein synthesis but also for the initiation of all mRNA translation through initiator tRNA(fMet) aminoacylation. In Photorhabdus laumondii subsp. laumondii (strain DSM 15139 / CIP 105565 / TT01) (Photorhabdus luminescens subsp. laumondii), this protein is Methionine--tRNA ligase.